The sequence spans 476 residues: Glutamate--tRNA ligase (476 aa).

The short motif at 9 to 19 (PSPTGLFHIGT) is the 'HIGH' region element. The 'KMSKS' region motif lies at 248–252 (KLSKR). Lysine 251 contacts ATP.

Belongs to the class-I aminoacyl-tRNA synthetase family. Glutamate--tRNA ligase type 1 subfamily. Monomer.

The protein resides in the cytoplasm. It carries out the reaction tRNA(Glu) + L-glutamate + ATP = L-glutamyl-tRNA(Glu) + AMP + diphosphate. Functionally, catalyzes the attachment of glutamate to tRNA(Glu) in a two-step reaction: glutamate is first activated by ATP to form Glu-AMP and then transferred to the acceptor end of tRNA(Glu). The chain is Glutamate--tRNA ligase from Prochlorococcus marinus (strain MIT 9301).